A 598-amino-acid polypeptide reads, in one-letter code: Transcription factor cpaR (598 aa).

The segment at residues 22–51 (CNGCRERKRRCVRRKRELPCLSCQAENRPC) is a DNA-binding region (zn(2)-C6 fungal-type).

It localises to the nucleus. Functionally, transcription factor; part of the gene cluster that mediates the biosynthesis of the fungal neurotoxin cyclopiazonic acid (CPA), a nanomolar inhibitor of Ca(2+)-ATPase with a unique pentacyclic indole tetramic acid scaffold. In Aspergillus oryzae (Yellow koji mold), this protein is Transcription factor cpaR.